The chain runs to 413 residues: uncharacterized protein (413 aa).

Residue lysine 265 is modified to N6-(pyridoxal phosphate)lysine.

Belongs to the threonine aldolase family. Requires pyridoxal 5'-phosphate as cofactor.

This is an uncharacterized protein from Caenorhabditis elegans.